Reading from the N-terminus, the 153-residue chain is uncharacterized protein (153 aa).

An N-terminal signal peptide occupies residues 1-19 (MKACLLLFFYFSFICQLHG).

This is an uncharacterized protein from Escherichia coli (strain K12).